Here is a 336-residue protein sequence, read N- to C-terminus: Probable aquaglyceroporin-2 (336 aa).

The disordered stretch occupies residues 1–46 (MPISTINDSISESSVHKSSIPTKVEMSQNEKYSEAPSEAPTIPPPP). Over 1–64 (MPISTINDSI…RENCQDAFSE (64 aa)) the chain is Cytoplasmic. A compositionally biased stretch (low complexity) spans 9–19 (SISESSVHKSS). Residues 65–85 (FFGTFVLLLFGDGVVAQVVLS) form a helical membrane-spanning segment. The Extracellular portion of the chain corresponds to 86–94 (RGTKGDYQS). Residues 95 to 115 (ISWGWGLGVMLGVYVGGKSGG) traverse the membrane as a helical segment. Over 116–135 (HLNPAVTLANCLFRGHPWRK) the chain is Cytoplasmic. Positions 118–120 (NPA) match the NPA 1 motif. The helical transmembrane segment at 136–156 (FPIYAVAQVLGAMAAAAVVYG) threads the bilayer. The Extracellular portion of the chain corresponds to 157 to 195 (NYKSAIDAYEGGPGIRTVIGENATAGVFCTYPAEFMTRT). N-linked (GlcNAc...) asparagine glycosylation occurs at Asn-178. A helical membrane pass occupies residues 196 to 216 (GMFFSEFIASTILQFVIFAMA). Over 217–223 (DSANIGA) the chain is Cytoplasmic. A helical transmembrane segment spans residues 224–244 (GPLMPLGLFFLIFGIGACFGW). The Extracellular segment spans residues 245-280 (ETGYAINLARDFGPRLVSYMLGYGSEVWSAGGYYFW). The short motif at 251 to 253 (NLA) is the NPA 2 element. Residues 281–301 (IPMVAPFFGCAFGGFLYDVFI) form a helical membrane-spanning segment. At 302–336 (YTGPSPINTPGMGFGRLVSPRRSTWSNTYNANSPV) the chain is on the cytoplasmic side.

Belongs to the MIP/aquaporin (TC 1.A.8) family.

The protein resides in the membrane. The catalysed reaction is H2O(in) = H2O(out). It carries out the reaction glycerol(in) = glycerol(out). Functionally, probable water/glycerol channel that may have redundant functions with FgAQP4. This Gibberella zeae (strain ATCC MYA-4620 / CBS 123657 / FGSC 9075 / NRRL 31084 / PH-1) (Wheat head blight fungus) protein is Probable aquaglyceroporin-2.